The following is a 278-amino-acid chain: Probable endonuclease LCL3 (278 aa).

The helical transmembrane segment at 15 to 37 (FSSDVVLLSLLISGSTLGAIAGY) threads the bilayer. The 206-residue stretch at 58–263 (RWMYGKVTAV…KAKKRGLWRQ (206 aa)) folds into the TNase-like domain. Arg154 is a catalytic residue. Asp159 is a Ca(2+) binding site. Residues Glu162 and Arg202 contribute to the active site.

This sequence belongs to the LCL3 family.

It is found in the mitochondrion. The protein localises to the membrane. This chain is Probable endonuclease LCL3 (LCL3), found in Vanderwaltozyma polyspora (strain ATCC 22028 / DSM 70294 / BCRC 21397 / CBS 2163 / NBRC 10782 / NRRL Y-8283 / UCD 57-17) (Kluyveromyces polysporus).